A 198-amino-acid polypeptide reads, in one-letter code: Probable molybdenum cofactor guanylyltransferase (198 aa).

GTP-binding positions include 9–11 (LAG), K22, D66, and D95. D95 provides a ligand contact to Mg(2+).

This sequence belongs to the MobA family. Mg(2+) is required as a cofactor.

The protein resides in the cytoplasm. The enzyme catalyses Mo-molybdopterin + GTP + H(+) = Mo-molybdopterin guanine dinucleotide + diphosphate. Functionally, transfers a GMP moiety from GTP to Mo-molybdopterin (Mo-MPT) cofactor (Moco or molybdenum cofactor) to form Mo-molybdopterin guanine dinucleotide (Mo-MGD) cofactor. The polypeptide is Probable molybdenum cofactor guanylyltransferase (Clostridium perfringens (strain SM101 / Type A)).